A 21-amino-acid polypeptide reads, in one-letter code: Fibrinogen beta chain (21 aa).

Pyrrolidone carboxylic acid is present on Gln1. Tyr6 bears the Sulfotyrosine mark.

Heterohexamer; disulfide linked. Contains 2 sets of 3 non-identical chains (alpha, beta and gamma). The 2 heterotrimers are in head to head conformation with the N-termini in a small central domain. Post-translationally, conversion of fibrinogen to fibrin is triggered by thrombin, which cleaves fibrinopeptides A and B from alpha and beta chains, and thus exposes the N-terminal polymerization sites responsible for the formation of the soft clot.

The protein localises to the secreted. Functionally, cleaved by the protease thrombin to yield monomers which, together with fibrinogen alpha (FGA) and fibrinogen gamma (FGG), polymerize to form an insoluble fibrin matrix. Fibrin has a major function in hemostasis as one of the primary components of blood clots. In addition, functions during the early stages of wound repair to stabilize the lesion and guide cell migration during re-epithelialization. Was originally thought to be essential for platelet aggregation, based on in vitro studies using anticoagulated blood. However subsequent studies have shown that it is not absolutely required for thrombus formation in vivo. Enhances expression of SELP in activated platelets. Maternal fibrinogen is essential for successful pregnancy. Fibrin deposition is also associated with infection, where it protects against IFNG-mediated hemorrhage. May also facilitate the antibacterial immune response via both innate and T-cell mediated pathways. The sequence is that of Fibrinogen beta chain (FGB) from Odocoileus hemionus (Mule deer).